Here is a 416-residue protein sequence, read N- to C-terminus: Gamma-glutamyl phosphate reductase (416 aa).

The protein belongs to the gamma-glutamyl phosphate reductase family.

The protein localises to the cytoplasm. The catalysed reaction is L-glutamate 5-semialdehyde + phosphate + NADP(+) = L-glutamyl 5-phosphate + NADPH + H(+). The protein operates within amino-acid biosynthesis; L-proline biosynthesis; L-glutamate 5-semialdehyde from L-glutamate: step 2/2. Functionally, catalyzes the NADPH-dependent reduction of L-glutamate 5-phosphate into L-glutamate 5-semialdehyde and phosphate. The product spontaneously undergoes cyclization to form 1-pyrroline-5-carboxylate. This chain is Gamma-glutamyl phosphate reductase, found in Salmonella schwarzengrund (strain CVM19633).